A 271-amino-acid chain; its full sequence is Tritrans,polycis-undecaprenyl-diphosphate synthase (geranylgeranyl-diphosphate specific) (271 aa).

The active site involves Asp50. Asp50 contributes to the Mg(2+) binding site. Residues Gly51–Arg54, Phe55, His67, and Ser95–Glu97 contribute to the substrate site. Asn98 serves as the catalytic Proton acceptor. Residues Arg101, Arg220, and Arg226–Ser228 contribute to the substrate site. A Mg(2+)-binding site is contributed by Glu239.

Belongs to the UPP synthase family. As to quaternary structure, homodimer. It depends on Mg(2+) as a cofactor.

The enzyme catalyses geranylgeranyl diphosphate + 7 isopentenyl diphosphate = tri-trans,hepta-cis-undecaprenyl diphosphate + 7 diphosphate. In terms of biological role, catalyzes the sequential condensation of isopentenyl diphosphate (IPP) with geranylgeranyl diphosphate (GGPP) to yield (2Z,6Z,10Z,14Z,18Z,22Z,26Z,30E,34E,38E)-undecaprenyl diphosphate (tritrans,heptacis-UPP). It is probably the precursor of glycosyl carrier lipids. The chain is Tritrans,polycis-undecaprenyl-diphosphate synthase (geranylgeranyl-diphosphate specific) from Methanopyrus kandleri (strain AV19 / DSM 6324 / JCM 9639 / NBRC 100938).